The chain runs to 441 residues: 23S rRNA (uracil(1939)-C(5))-methyltransferase RlmD (441 aa).

A TRAM domain is found at 1–56 (MSIDSLDMEARGVGRLLNEDGTPGKVIFVEGALPGETVSYRSFRRKPSYEQAHLVE). Residues Cys69, Cys75, Cys78, and Cys157 each contribute to the [4Fe-4S] cluster site. 6 residues coordinate S-adenosyl-L-methionine: Gln265, Phe294, Asn299, Glu315, Asn343, and Asp364. Cys397 (nucleophile) is an active-site residue.

It belongs to the class I-like SAM-binding methyltransferase superfamily. RNA M5U methyltransferase family. RlmD subfamily.

It catalyses the reaction uridine(1939) in 23S rRNA + S-adenosyl-L-methionine = 5-methyluridine(1939) in 23S rRNA + S-adenosyl-L-homocysteine + H(+). In terms of biological role, catalyzes the formation of 5-methyl-uridine at position 1939 (m5U1939) in 23S rRNA. The polypeptide is 23S rRNA (uracil(1939)-C(5))-methyltransferase RlmD (Cupriavidus necator (strain ATCC 17699 / DSM 428 / KCTC 22496 / NCIMB 10442 / H16 / Stanier 337) (Ralstonia eutropha)).